The primary structure comprises 444 residues: Homogentisate 1,2-dioxygenase (444 aa).

The Proton acceptor role is filled by His298. The Fe cation site is built by His341 and Glu347. Residues Tyr356 and His377 each coordinate homogentisate. His377 is a Fe cation binding site.

Belongs to the homogentisate dioxygenase family. As to quaternary structure, hexamer; dimer of trimers. It depends on Fe cation as a cofactor.

It catalyses the reaction homogentisate + O2 = 4-maleylacetoacetate + H(+). It participates in amino-acid degradation; L-phenylalanine degradation; acetoacetate and fumarate from L-phenylalanine: step 4/6. Its function is as follows. Involved in the catabolism of homogentisate (2,5-dihydroxyphenylacetate or 2,5-OH-PhAc), a central intermediate in the degradation of phenylalanine and tyrosine. Catalyzes the oxidative ring cleavage of the aromatic ring of homogentisate to yield maleylacetoacetate. The chain is Homogentisate 1,2-dioxygenase from Burkholderia orbicola (strain AU 1054).